A 66-amino-acid chain; its full sequence is Large ribosomal subunit protein bL35 (66 aa).

Positions 1–15 are enriched in basic residues; it reads MSKMKTKSGAKKRFK. The tract at residues 1 to 35 is disordered; sequence MSKMKTKSGAKKRFKLTASGKVKAGQAGKRHGMIK.

It belongs to the bacterial ribosomal protein bL35 family.

This is Large ribosomal subunit protein bL35 from Maricaulis maris (strain MCS10) (Caulobacter maris).